An 89-amino-acid chain; its full sequence is Small ribosomal subunit protein uS17 (89 aa).

The protein belongs to the universal ribosomal protein uS17 family. As to quaternary structure, part of the 30S ribosomal subunit.

Its function is as follows. One of the primary rRNA binding proteins, it binds specifically to the 5'-end of 16S ribosomal RNA. The protein is Small ribosomal subunit protein uS17 of Chlorobaculum tepidum (strain ATCC 49652 / DSM 12025 / NBRC 103806 / TLS) (Chlorobium tepidum).